Reading from the N-terminus, the 673-residue chain is DNA ligase (673 aa).

NAD(+) contacts are provided by residues 32–36 (DAEYD), 81–82 (SL), and Glu-113. The active-site N6-AMP-lysine intermediate is Lys-115. NAD(+) is bound by residues Arg-136, Glu-173, Lys-290, and Lys-314. Zn(2+) contacts are provided by Cys-408, Cys-411, Cys-426, and Cys-432. The 79-residue stretch at 595–673 (EIDSPFAGKT…EAEMIRLLGA (79 aa)) folds into the BRCT domain.

It belongs to the NAD-dependent DNA ligase family. LigA subfamily. Requires Mg(2+) as cofactor. Mn(2+) is required as a cofactor.

It catalyses the reaction NAD(+) + (deoxyribonucleotide)n-3'-hydroxyl + 5'-phospho-(deoxyribonucleotide)m = (deoxyribonucleotide)n+m + AMP + beta-nicotinamide D-nucleotide.. Functionally, DNA ligase that catalyzes the formation of phosphodiester linkages between 5'-phosphoryl and 3'-hydroxyl groups in double-stranded DNA using NAD as a coenzyme and as the energy source for the reaction. It is essential for DNA replication and repair of damaged DNA. This is DNA ligase from Serratia proteamaculans (strain 568).